The primary structure comprises 309 residues: MNQEVYDLVIIGAGPAGLAAAVYAKRSGLNVIIVEKQFPGGKIALTSNVENYLGINSIPGPELAYKMYEQVLNLNVSIIYEAADEISLKEKYKKIKLTTQTLITKTVIIATGTENRRLNILGELEFENKGISYCAICDGPLYKNKAVSVIGSGNSAVEEAIYLATIAKEVHLIANKPQFKAEQQLVQIANNTPNIKIYYNKQTFEFFGHQFLEGLKFRDLITNEVTTLNIEANFTFIGLLPSRINTNNLCIFNEVNGFITTDKNMQTSVCGIFAAGDIVDKNVRQIATATNDGVIAALYAKEYITRNNW.

35–42 is a binding site for FAD; sequence EKQFPGGK. Cysteine 134 and cysteine 137 are joined by a disulfide. An FAD-binding site is contributed by 277–286; the sequence is DIVDKNVRQI.

This sequence belongs to the class-II pyridine nucleotide-disulfide oxidoreductase family. In terms of assembly, homodimer. It depends on FAD as a cofactor.

Its subcellular location is the cytoplasm. The catalysed reaction is [thioredoxin]-dithiol + NADP(+) = [thioredoxin]-disulfide + NADPH + H(+). The sequence is that of Thioredoxin reductase (trxB) from Ureaplasma parvum serovar 3 (strain ATCC 700970).